The sequence spans 455 residues: Neuronal acetylcholine receptor subunit beta-3 (455 aa).

The signal sequence occupies residues 1 to 20 (MLCLMLCVLCWSRSDVAALG). At 21-229 (SVVENEDALL…VTYSFVLRRL (209 aa)) the chain is on the extracellular side. N-linked (GlcNAc...) asparagine glycosylation is found at asparagine 48 and asparagine 163. Residues cysteine 150 and cysteine 164 are joined by a disulfide bond. Helical transmembrane passes span 230 to 254 (PLFY…VFYL), 262 to 279 (LSLS…LLVI), and 296 to 317 (YLLF…VINV). Residues 318 to 425 (HHRSSATYHP…WKFVAQVLDR (108 aa)) lie on the Cytoplasmic side of the membrane. The chain crosses the membrane as a helical span at residues 426–444 (IFLWLFLVVSVTGSVLIFT).

It belongs to the ligand-gated ion channel (TC 1.A.9) family. Acetylcholine receptor (TC 1.A.9.1) subfamily. Beta-3/CHRNB3 sub-subfamily. Neuronal AChR seems to be composed of two different type of subunits: alpha and beta. CHRNB3/beta-3 subunit is only able to form functional nAChRs when co-assembled with another beta subunit. Participates in pentameric assemblies along with CHRNA4/alpha-4 and CHRNB2/beta-2 subunits and with CHRNA6/alpha-6 as well, forming stoichiometries such as (CHRNA3:CHRNB4)2:CHRNB3, (CHRNA4:CHRNB2)2:CHRNB3 or (CHRNA6:CHRNB2)2:CHRNB3. In terms of tissue distribution, relatively abundant in the developing retina and in the trigeminal ganglion.

The protein localises to the synaptic cell membrane. It localises to the cell membrane. The enzyme catalyses Ca(2+)(in) = Ca(2+)(out). The catalysed reaction is K(+)(in) = K(+)(out). It carries out the reaction Na(+)(in) = Na(+)(out). Its activity is regulated as follows. Activated by a myriad of ligands such as acetylcholine, cytisine, nicotine, choline and epibatidine. In terms of biological role, component of neuronal acetylcholine receptors (nAChRs) that function as pentameric, ligand-gated cation channels with high calcium permeability among other activities. nAChRs are excitatory neurotrasnmitter receptors formed by a collection of nAChR subunits known to mediate synaptic transmission in the nervous system and the neuromuscular junction. Each nAchR subunit confers differential attributes to channel properties, including activation, deactivation and desensitization kinetics, pH sensitivity, cation permeability, and binding to allosteric modulators. Has an accessory rather than functional role and is only able to form functional nAChRs when co-assembled with another beta subunit. Participates in pentameric assemblies along with CHRNA3, CHRNA4, CHRNA6, CHRNB2 and CHRNB4. Modulates receptor assembly and increases receptor sensitivity to nicotine when associated with CHRNB2, CHRNA4 and/or CHRNA6 as well as CHRNA3 and CHRNB4. Seems to play a role in nicotine addiction. The sequence is that of Neuronal acetylcholine receptor subunit beta-3 (CHRNB3) from Gallus gallus (Chicken).